The following is a 243-amino-acid chain: Probable ubiquitin-conjugating enzyme E2 33 (243 aa).

The region spanning 5–162 is the UBC core domain; sequence ACIKRLQKEY…FPEYVEKYSQ (158 aa). Cys87 serves as the catalytic Glycyl thioester intermediate. The tract at residues 168 to 197 is disordered; that stretch reads EEAATQQTTTSENQDFPQKDNAKVESEKSV. Residues 184–197 show a composition bias toward basic and acidic residues; the sequence is PQKDNAKVESEKSV. The helical transmembrane segment at 220 to 240 threads the bilayer; that stretch reads LPGWIVLLLVSIVGVVMALPL.

It belongs to the ubiquitin-conjugating enzyme family.

The protein resides in the membrane. It catalyses the reaction S-ubiquitinyl-[E1 ubiquitin-activating enzyme]-L-cysteine + [E2 ubiquitin-conjugating enzyme]-L-cysteine = [E1 ubiquitin-activating enzyme]-L-cysteine + S-ubiquitinyl-[E2 ubiquitin-conjugating enzyme]-L-cysteine.. It participates in protein modification; protein ubiquitination. Its function is as follows. Accepts the ubiquitin from the E1 complex and catalyzes its covalent attachment to other proteins. The chain is Probable ubiquitin-conjugating enzyme E2 33 (UBC33) from Arabidopsis thaliana (Mouse-ear cress).